A 213-amino-acid polypeptide reads, in one-letter code: Nicotinamidase (213 aa).

Residue Asp10 is the Proton acceptor of the active site. Zn(2+) is bound by residues Asp52, His54, and His86. Lys111 is a catalytic residue. The Nucleophile role is filled by Cys156.

The protein belongs to the isochorismatase family.

It carries out the reaction nicotinamide + H2O = nicotinate + NH4(+). The catalysed reaction is pyrazinamide + H2O = pyrazine-2-carboxylate + NH4(+). Its pathway is cofactor biosynthesis; nicotinate biosynthesis; nicotinate from nicotinamide: step 1/1. Catalyzes the deamidation of nicotinamide (NAM) into nicotinate. Likely functions in the cyclical salvage pathway for production of NAD from nicotinamide. Functionally, is also able to hydrolyze the first-line antituberculous drug pyrazinamide (PZA) into pyrazinoic acid in vitro, but this reaction is not considered to be physiologically relevant. The polypeptide is Nicotinamidase (Escherichia coli (strain K12)).